The following is a 466-amino-acid chain: Uronate isomerase (466 aa).

It belongs to the metallo-dependent hydrolases superfamily. Uronate isomerase family.

It carries out the reaction D-glucuronate = D-fructuronate. The catalysed reaction is aldehydo-D-galacturonate = keto-D-tagaturonate. The protein operates within carbohydrate metabolism; pentose and glucuronate interconversion. In Caldanaerobacter subterraneus subsp. tengcongensis (strain DSM 15242 / JCM 11007 / NBRC 100824 / MB4) (Thermoanaerobacter tengcongensis), this protein is Uronate isomerase.